Consider the following 612-residue polypeptide: UvrABC system protein C (612 aa).

In terms of domain architecture, GIY-YIG spans 15 to 93 (HLPGVYRMYD…IKQHQPKYNV (79 aa)). A UVR domain is found at 203-238 (SQVIDYLMQKMEIAASELDFETAARFRDQIQSVRAV).

This sequence belongs to the UvrC family. As to quaternary structure, interacts with UvrB in an incision complex.

It is found in the cytoplasm. The UvrABC repair system catalyzes the recognition and processing of DNA lesions. UvrC both incises the 5' and 3' sides of the lesion. The N-terminal half is responsible for the 3' incision and the C-terminal half is responsible for the 5' incision. This Haemophilus ducreyi (strain 35000HP / ATCC 700724) protein is UvrABC system protein C.